We begin with the raw amino-acid sequence, 166 residues long: Small ribosomal subunit protein uS5 (166 aa).

The region spanning 11–74 is the S5 DRBM domain; it reads LQEKLIAVNR…EQAKRNLSKV (64 aa).

It belongs to the universal ribosomal protein uS5 family. In terms of assembly, part of the 30S ribosomal subunit. Contacts proteins S4 and S8.

Functionally, with S4 and S12 plays an important role in translational accuracy. Its function is as follows. Located at the back of the 30S subunit body where it stabilizes the conformation of the head with respect to the body. In Aeromonas salmonicida (strain A449), this protein is Small ribosomal subunit protein uS5.